The chain runs to 386 residues: MSRSWISKRESKILYILLTTTELYLKTGQPVGSKTLKEYECSNLSTATIRNYFSELESEGFLKKNHISGGRIPTDLAFRYYVDHCADFSQSELPESTTRLLNQLPEESQNIVKDLQKALEILGEALQLPTCFSSPRFENDSITNIQISLVDEQRVVVILSTEFGQVFTETLWLPETSSPASVKRIETFLQSYVRKQPPTEILSQKEEDLGMTLYNEVVVRYLTRYCNFSEEDLYQTGLSKLLKYDAFKDPDTLALGLSFFENRRHMCKLLDIGMHRDRPTAFIGNELSTIFGTPNPQCAVITTPYYMNRTPLGAFGVLGPINLPYREIFQTLTIFADKVKDSLTQSFYKFKLSFRRPCPSDPKLSKEPTLLARYSSIKLLPPKETS.

It belongs to the HrcA family.

Functionally, negative regulator of class I heat shock genes (grpE-dnaK-dnaJ and groELS operons). Prevents heat-shock induction of these operons. The protein is Heat-inducible transcription repressor HrcA of Chlamydia felis (strain Fe/C-56) (Chlamydophila felis).